Reading from the N-terminus, the 224-residue chain is Probable GTP-binding protein EngB (224 aa).

The 175-residue stretch at 27 to 201 (SGIEVAFAGR…DAIICQWLEQ (175 aa)) folds into the EngB-type G domain. GTP-binding positions include 35–42 (GRSNAGKS), 62–66 (GRTQL), 80–83 (DLPG), 147–150 (TKCD), and 180–182 (FSS). Ser-42 and Thr-64 together coordinate Mg(2+). The segment at 205–224 (EYELPEEDDFDDSDEFTEEE) is disordered.

Belongs to the TRAFAC class TrmE-Era-EngA-EngB-Septin-like GTPase superfamily. EngB GTPase family. Mg(2+) is required as a cofactor.

In terms of biological role, necessary for normal cell division and for the maintenance of normal septation. This chain is Probable GTP-binding protein EngB, found in Colwellia psychrerythraea (strain 34H / ATCC BAA-681) (Vibrio psychroerythus).